Reading from the N-terminus, the 760-residue chain is ER membrane protein complex subunit 1 (760 aa).

The first 24 residues, 1 to 24, serve as a signal peptide directing secretion; it reads MKITCTDLVYVFILLFLNTSCVQA. The Lumenal portion of the chain corresponds to 25–723; the sequence is VFSDDAFITD…PSGQFDLMSP (699 aa). Asn73, Asn106, Asn192, Asn202, Asn420, Asn443, Asn574, and Asn578 each carry an N-linked (GlcNAc...) asparagine glycan. Residues 724-744 form a helical membrane-spanning segment; it reads TFEKGKLLITIFVLLVITYFI. Residues 745-760 are Cytoplasmic-facing; it reads RPSVSNKKLKSQWLIK.

Belongs to the EMC1 family. In terms of assembly, component of the ER membrane protein complex (EMC), which is composed of EMC1, EMC2, EMC3, EMC4, EMC5 and EMC6. Post-translationally, N-glycosylated.

The protein resides in the endoplasmic reticulum membrane. Part of the endoplasmic reticulum membrane protein complex (EMC) that enables the energy-independent insertion into endoplasmic reticulum membranes of newly synthesized membrane proteins. Preferentially accommodates proteins with transmembrane domains that are weakly hydrophobic or contain destabilizing features such as charged and aromatic residues. Involved in the cotranslational insertion of multi-pass membrane proteins in which stop-transfer membrane-anchor sequences become ER membrane spanning helices. It is also required for the post-translational insertion of tail-anchored/TA proteins in endoplasmic reticulum membranes. By mediating the proper cotranslational insertion of N-terminal transmembrane domains in an N-exo topology, with translocated N-terminus in the lumen of the ER, controls the topology of multi-pass membrane proteins. In Saccharomyces cerevisiae (strain ATCC 204508 / S288c) (Baker's yeast), this protein is ER membrane protein complex subunit 1 (EMC1).